A 319-amino-acid polypeptide reads, in one-letter code: ATP-dependent 6-phosphofructokinase (319 aa).

Gly11 contributes to the ATP binding site. 21 to 25 serves as a coordination point for ADP; sequence RAVVR. ATP-binding positions include 72–73 and 102–105; these read RC and GDGS. Asp103 lines the Mg(2+) pocket. 125-127 contacts substrate; the sequence is TID. The Proton acceptor role is filled by Asp127. Arg154 lines the ADP pocket. Residues Arg162 and 169 to 171 each bind substrate; that span reads MGR. Residues 185-187, Arg211, and 213-215 each bind ADP; these read GAE and KRH. Substrate contacts are provided by residues Glu222, Arg243, and 249-252; that span reads HVQR.

Belongs to the phosphofructokinase type A (PFKA) family. ATP-dependent PFK group I subfamily. Prokaryotic clade 'B1' sub-subfamily. In terms of assembly, homotetramer. Mg(2+) serves as cofactor.

Its subcellular location is the cytoplasm. The enzyme catalyses beta-D-fructose 6-phosphate + ATP = beta-D-fructose 1,6-bisphosphate + ADP + H(+). It functions in the pathway carbohydrate degradation; glycolysis; D-glyceraldehyde 3-phosphate and glycerone phosphate from D-glucose: step 3/4. With respect to regulation, allosterically activated by ADP and other diphosphonucleosides, and allosterically inhibited by phosphoenolpyruvate. In terms of biological role, catalyzes the phosphorylation of D-fructose 6-phosphate to fructose 1,6-bisphosphate by ATP, the first committing step of glycolysis. In Clostridioides difficile (strain 630) (Peptoclostridium difficile), this protein is ATP-dependent 6-phosphofructokinase.